A 225-amino-acid chain; its full sequence is UPF0758 protein BAMEG_4721 (225 aa).

The region spanning 103-225 (SIRSPEDCAT…FVSLKEKGHI (123 aa)) is the MPN domain. The Zn(2+) site is built by histidine 174, histidine 176, and aspartate 187. The JAMM motif motif lies at 174-187 (HNHPSGDPAPSRED).

The protein belongs to the UPF0758 family.

The protein is UPF0758 protein BAMEG_4721 of Bacillus anthracis (strain CDC 684 / NRRL 3495).